Consider the following 831-residue polypeptide: DNA ligase (831 aa).

Residues 34–38, 83–84, and Glu114 each bind NAD(+); these read DADYD and SL. Catalysis depends on Lys116, which acts as the N6-AMP-lysine intermediate. The NAD(+) site is built by Arg137, Glu174, Lys291, and Lys315. Residues Cys409, Cys412, Cys427, and Cys433 each coordinate Zn(2+). Residues 749-831 enclose the BRCT domain; sequence AHTAPLNGQS…LDFLEQYSAQ (83 aa).

This sequence belongs to the NAD-dependent DNA ligase family. LigA subfamily. Requires Mg(2+) as cofactor. Mn(2+) is required as a cofactor.

It catalyses the reaction NAD(+) + (deoxyribonucleotide)n-3'-hydroxyl + 5'-phospho-(deoxyribonucleotide)m = (deoxyribonucleotide)n+m + AMP + beta-nicotinamide D-nucleotide.. DNA ligase that catalyzes the formation of phosphodiester linkages between 5'-phosphoryl and 3'-hydroxyl groups in double-stranded DNA using NAD as a coenzyme and as the energy source for the reaction. It is essential for DNA replication and repair of damaged DNA. The chain is DNA ligase from Xylella fastidiosa (strain M12).